A 155-amino-acid polypeptide reads, in one-letter code: SsrA-binding protein (155 aa).

It belongs to the SmpB family.

Its subcellular location is the cytoplasm. In terms of biological role, required for rescue of stalled ribosomes mediated by trans-translation. Binds to transfer-messenger RNA (tmRNA), required for stable association of tmRNA with ribosomes. tmRNA and SmpB together mimic tRNA shape, replacing the anticodon stem-loop with SmpB. tmRNA is encoded by the ssrA gene; the 2 termini fold to resemble tRNA(Ala) and it encodes a 'tag peptide', a short internal open reading frame. During trans-translation Ala-aminoacylated tmRNA acts like a tRNA, entering the A-site of stalled ribosomes, displacing the stalled mRNA. The ribosome then switches to translate the ORF on the tmRNA; the nascent peptide is terminated with the 'tag peptide' encoded by the tmRNA and targeted for degradation. The ribosome is freed to recommence translation, which seems to be the essential function of trans-translation. This Streptococcus pneumoniae serotype 4 (strain ATCC BAA-334 / TIGR4) protein is SsrA-binding protein.